A 336-amino-acid chain; its full sequence is HTH-type transcriptional repressor PurR (336 aa).

An HTH lacI-type domain is found at 2–56 (ATIKDVAKLAGVSTTTVSHVINKTRFVAEDTSKAVWDAIQQLNYSPSAVARSLKV). The segment at residues 4-23 (IKDVAKLAGVSTTTVSHVIN) is a DNA-binding region (H-T-H motif). Residues 48 to 56 (SAVARSLKV) mediate DNA binding. The hypoxanthine site is built by Y73, K188, F219, and D273.

Homodimer.

It participates in purine metabolism; purine nucleotide biosynthesis [regulation]. Its function is as follows. Is the main repressor of the genes involved in the de novo synthesis of purine nucleotides, regulating purB, purC, purEK, purF, purHD, purL, purMN and guaBA expression. PurR is allosterically activated to bind its cognate DNA by binding the purine corepressors, hypoxanthine or guanine, thereby effecting transcription repression. The sequence is that of HTH-type transcriptional repressor PurR from Actinobacillus pleuropneumoniae serotype 3 (strain JL03).